The primary structure comprises 593 residues: UvrABC system protein C (593 aa).

Residues 14–91 (DSPGCYLHKD…IQENMPKYNI (78 aa)) enclose the GIY-YIG domain. In terms of domain architecture, UVR spans 196-231 (NKIVNGLTEKMKSAAMTMEFERAAEYRDLIEAISLL).

The protein belongs to the UvrC family. As to quaternary structure, interacts with UvrB in an incision complex.

The protein localises to the cytoplasm. The UvrABC repair system catalyzes the recognition and processing of DNA lesions. UvrC both incises the 5' and 3' sides of the lesion. The N-terminal half is responsible for the 3' incision and the C-terminal half is responsible for the 5' incision. The polypeptide is UvrABC system protein C (Streptococcus agalactiae serotype V (strain ATCC BAA-611 / 2603 V/R)).